Reading from the N-terminus, the 467-residue chain is Asparagine--tRNA ligase (467 aa).

Belongs to the class-II aminoacyl-tRNA synthetase family. Homodimer.

It is found in the cytoplasm. It catalyses the reaction tRNA(Asn) + L-asparagine + ATP = L-asparaginyl-tRNA(Asn) + AMP + diphosphate + H(+). This is Asparagine--tRNA ligase from Actinobacillus pleuropneumoniae serotype 5b (strain L20).